Reading from the N-terminus, the 253-residue chain is CTP:phosphoglutamine cytidylyltransferase (253 aa).

It carries out the reaction N(5)-phospho-L-glutamine + CTP + H(+) = N(5)-(cytidine 5'-diphosphoramidyl)-L-glutamine + diphosphate. The protein operates within capsule biogenesis; capsule polysaccharide biosynthesis. Its function is as follows. Involved in the biosynthesis of the O-methyl phosphoramidate (MeOPN) group found on the capsular polysaccharide (CPS) of C.jejuni. Catalyzes the formation of CDP-L-glutamine from CTP and L-glutamine phosphate. In the presence of MnCTP, catalyzes the displacement of pyrophosphate from CTP using phosphoramidate, methyl phosphate, methyl phosphonate, phosphate, arsenate, ethanolamine phosphate, (R/S)-glycerol-1-phosphate, glycerol-2-phosphate, serinol phosphate, L-serine phosphate and 3-phospho-D-glycerate as substrate in addition to L-glutamine phosphate. The sequence is that of CTP:phosphoglutamine cytidylyltransferase from Campylobacter jejuni subsp. jejuni serotype O:2 (strain ATCC 700819 / NCTC 11168).